Consider the following 590-residue polypeptide: Aspartate--tRNA(Asp/Asn) ligase (590 aa).

Glu172 is an L-aspartate binding site. Positions 196-199 (QLFK) are aspartate. Arg218 serves as a coordination point for L-aspartate. ATP-binding positions include 218-220 (RDE) and Gln227. An L-aspartate-binding site is contributed by His449. Glu484 lines the ATP pocket. Position 491 (Arg491) interacts with L-aspartate. An ATP-binding site is contributed by 536-539 (GIDR).

The protein belongs to the class-II aminoacyl-tRNA synthetase family. Type 1 subfamily. Homodimer.

It is found in the cytoplasm. The enzyme catalyses tRNA(Asx) + L-aspartate + ATP = L-aspartyl-tRNA(Asx) + AMP + diphosphate. In terms of biological role, aspartyl-tRNA synthetase with relaxed tRNA specificity since it is able to aspartylate not only its cognate tRNA(Asp) but also tRNA(Asn). Reaction proceeds in two steps: L-aspartate is first activated by ATP to form Asp-AMP and then transferred to the acceptor end of tRNA(Asp/Asn). This chain is Aspartate--tRNA(Asp/Asn) ligase, found in Francisella tularensis subsp. tularensis (strain SCHU S4 / Schu 4).